The chain runs to 195 residues: Large ribosomal subunit protein uL11m (195 aa).

This sequence belongs to the universal ribosomal protein uL11 family. As to quaternary structure, component of the mitochondrial ribosome large subunit (39S) which comprises a 16S rRNA and about 50 distinct proteins.

Its subcellular location is the mitochondrion. The sequence is that of Large ribosomal subunit protein uL11m (mrpl-11) from Caenorhabditis elegans.